Consider the following 592-residue polypeptide: Colicin-A (592 aa).

Composition is skewed to gly residues over residues 1 to 13 (MPGF…GDGT) and 23 to 34 (PEPGGGSHGNSG). Disordered stretches follow at residues 1–57 (MPGF…PGDS) and 373–395 (RQRQ…KAKD). 2 helical membrane passes run 528-548 (WVLS…TLGA) and 555-575 (VPAI…GALI).

The protein belongs to the channel forming colicin family.

It localises to the cell membrane. In terms of biological role, this colicin is a channel-forming colicin. This class of transmembrane toxins depolarize the cytoplasmic membrane, leading to dissipation of cellular energy. Functionally, colicins are polypeptide toxins produced by and active against E.coli and closely related bacteria. The chain is Colicin-A (caa) from Citrobacter freundii.